Consider the following 744-residue polypeptide: Serine/threonine-protein kinase GM11705 (744 aa).

Polar residues predominate over residues 17-35 (VLSSHQPSPSATHPQSVPS). 2 disordered regions span residues 17-38 (VLSS…SKAN) and 54-78 (NVQE…PEKE). Doublecortin domains are found at residues 154 to 240 (LRIK…VEYN) and 309 to 392 (RIVT…AEDF). In terms of domain architecture, Protein kinase spans 473–731 (YTLGRIIGDG…SEDILDHPWT (259 aa)). ATP contacts are provided by residues 479–487 (IGDGNFAIV) and Lys502. Asp594 functions as the Proton acceptor in the catalytic mechanism.

This sequence belongs to the protein kinase superfamily. CAMK Ser/Thr protein kinase family. CaMK subfamily.

It carries out the reaction L-seryl-[protein] + ATP = O-phospho-L-seryl-[protein] + ADP + H(+). It catalyses the reaction L-threonyl-[protein] + ATP = O-phospho-L-threonyl-[protein] + ADP + H(+). This is Serine/threonine-protein kinase GM11705 from Drosophila sechellia (Fruit fly).